The chain runs to 145 residues: ATP synthase epsilon chain (145 aa).

The protein belongs to the ATPase epsilon chain family. As to quaternary structure, F-type ATPases have 2 components, CF(1) - the catalytic core - and CF(0) - the membrane proton channel. CF(1) has five subunits: alpha(3), beta(3), gamma(1), delta(1), epsilon(1). CF(0) has three main subunits: a, b and c.

The protein resides in the cell inner membrane. Its function is as follows. Produces ATP from ADP in the presence of a proton gradient across the membrane. The chain is ATP synthase epsilon chain from Francisella tularensis subsp. tularensis (strain FSC 198).